A 354-amino-acid chain; its full sequence is LAS seventeen-binding protein 5 (354 aa).

A VHS domain is found at 15 to 161; the sequence is TIFRIVSSRD…LGQTVKQRYS (147 aa). 2 disordered regions span residues 160–184 and 296–354; these read YSKS…DDSA and SAQD…HNKI. Positions 296–310 are enriched in basic and acidic residues; sequence SAQDDSSDESDHGSY.

It belongs to the LSB5 family. Interacts with SLA1 and LAS17.

The protein resides in the cytoplasm. Its subcellular location is the cell cortex. The protein localises to the cytoskeleton. Functionally, essential for the organization of the actin cytoskeleton, fluid phase endocytosis and vesicle trafficking, together with YSC84. This Saccharomyces cerevisiae (strain ATCC 204508 / S288c) (Baker's yeast) protein is LAS seventeen-binding protein 5 (LSB5).